A 157-amino-acid chain; its full sequence is Protein AE7 (157 aa).

It belongs to the MIP18 family. Part of a complex formed of AE7, CIA1, MMS19 and NAR1. Interacts with CIA1 and MMS19, but not with NAR1. In terms of tissue distribution, expressed in the embryo, shoot apical meristem, leaf primordia, inflorescence and all floral organs.

Its subcellular location is the nucleus. It localises to the cytoplasm. Functionally, central member of the cytosolic iron-sulfur (Fe-S) protein assembly (CIA) pathway. Involved in leaf polarity formation. Promotes leaf adaxial identity. May play a role in the cell cycle progression and is required for cell proliferation. This Arabidopsis thaliana (Mouse-ear cress) protein is Protein AE7.